Reading from the N-terminus, the 509-residue chain is 2-isopropylmalate synthase (509 aa).

One can recognise a Pyruvate carboxyltransferase domain in the interval 5–267 (IQIFDTTLRD…QTALNLEETK (263 aa)). Mn(2+)-binding residues include Asp14, His202, His204, and Asn238. The tract at residues 391-509 (KLETLQLQYV…AAENVEKVGN (119 aa)) is regulatory domain.

Belongs to the alpha-IPM synthase/homocitrate synthase family. LeuA type 1 subfamily. In terms of assembly, homodimer. Mn(2+) serves as cofactor.

It is found in the cytoplasm. It carries out the reaction 3-methyl-2-oxobutanoate + acetyl-CoA + H2O = (2S)-2-isopropylmalate + CoA + H(+). The protein operates within amino-acid biosynthesis; L-leucine biosynthesis; L-leucine from 3-methyl-2-oxobutanoate: step 1/4. In terms of biological role, catalyzes the condensation of the acetyl group of acetyl-CoA with 3-methyl-2-oxobutanoate (2-ketoisovalerate) to form 3-carboxy-3-hydroxy-4-methylpentanoate (2-isopropylmalate). In Staphylococcus aureus (strain MW2), this protein is 2-isopropylmalate synthase.